The sequence spans 292 residues: Undecaprenyl-diphosphatase (292 aa).

5 helical membrane passes run 87–107, 113–133, 190–210, 219–239, and 250–270; these read MGWY…LFEE, FRDL…LGMV, AFLL…KDIG, ATIV…AWFM, and FVYY…FGVL.

This sequence belongs to the UppP family.

Its subcellular location is the cell membrane. The enzyme catalyses di-trans,octa-cis-undecaprenyl diphosphate + H2O = di-trans,octa-cis-undecaprenyl phosphate + phosphate + H(+). Functionally, catalyzes the dephosphorylation of undecaprenyl diphosphate (UPP). Confers resistance to bacitracin. This is Undecaprenyl-diphosphatase from Thermobifida fusca (strain YX).